The chain runs to 445 residues: Sporulation-specific glucan 1,3-beta-glucosidase (445 aa).

A signal peptide spans Met1 to Asn21. An N-linked (GlcNAc...) asparagine glycan is attached at Asn201. Residue Glu233 is the Proton donor of the active site. Catalysis depends on Glu335, which acts as the Nucleophile.

The protein belongs to the glycosyl hydrolase 5 (cellulase A) family.

Its subcellular location is the secreted. It carries out the reaction Successive hydrolysis of beta-D-glucose units from the non-reducing ends of (1-&gt;3)-beta-D-glucans, releasing alpha-glucose.. In terms of biological role, probably involved in the processes of spore formation and contributes to ascospore thermoresistance by participating in the morphogenesis of ascospore walls. The enzyme may do this by modifying glucan linkages in the developing ascospore wall, thus strengthening it or lending it plasticity. The polypeptide is Sporulation-specific glucan 1,3-beta-glucosidase (SPR1) (Saccharomyces cerevisiae (strain ATCC 204508 / S288c) (Baker's yeast)).